The chain runs to 336 residues: Ornithine carbamoyltransferase, catabolic (336 aa).

Carbamoyl phosphate contacts are provided by residues S62–T65, Q89, R113, and H140–Q143. Residues N172, D236, and S240–M241 contribute to the L-ornithine site. Carbamoyl phosphate is bound by residues C277–L278 and R322.

It belongs to the aspartate/ornithine carbamoyltransferase superfamily. OTCase family.

The protein localises to the cytoplasm. The enzyme catalyses carbamoyl phosphate + L-ornithine = L-citrulline + phosphate + H(+). Its pathway is amino-acid degradation; L-arginine degradation via ADI pathway; carbamoyl phosphate from L-arginine: step 2/2. Reversibly catalyzes the transfer of the carbamoyl group from carbamoyl phosphate (CP) to the N(epsilon) atom of ornithine (ORN) to produce L-citrulline. This Staphylococcus aureus (strain MRSA252) protein is Ornithine carbamoyltransferase, catabolic.